The sequence spans 635 residues: Biosynthetic arginine decarboxylase (635 aa).

Position 100 is an N6-(pyridoxal phosphate)lysine (lysine 100). Position 282–292 (282–292) interacts with substrate; it reads VDIGGGLGVDY.

It belongs to the Orn/Lys/Arg decarboxylase class-II family. SpeA subfamily. It depends on Mg(2+) as a cofactor. Pyridoxal 5'-phosphate serves as cofactor.

The catalysed reaction is L-arginine + H(+) = agmatine + CO2. Its pathway is amine and polyamine biosynthesis; agmatine biosynthesis; agmatine from L-arginine: step 1/1. Its function is as follows. Catalyzes the biosynthesis of agmatine from arginine. The sequence is that of Biosynthetic arginine decarboxylase from Geotalea daltonii (strain DSM 22248 / JCM 15807 / FRC-32) (Geobacter daltonii).